The chain runs to 546 residues: CTP synthase (546 aa).

The amidoligase domain stretch occupies residues 1-266 (MTTNYIFVTG…DDLVCTRFGI (266 aa)). Ser14 is a binding site for CTP. Ser14 provides a ligand contact to UTP. ATP is bound by residues 15–20 (SLGKGI) and Asp72. Residues Asp72 and Glu140 each coordinate Mg(2+). CTP is bound by residues 147-149 (DIE), 187-192 (KTKPTQ), and Lys223. UTP is bound by residues 187 to 192 (KTKPTQ) and Lys223. 239-241 (KDV) provides a ligand contact to ATP. A Glutamine amidotransferase type-1 domain is found at 291 to 542 (TIGMVGKYIE…VKAAGQYSRG (252 aa)). Gly352 is an L-glutamine binding site. Catalysis depends on Cys379, which acts as the Nucleophile; for glutamine hydrolysis. L-glutamine-binding positions include 380–383 (LGMQ), Glu403, and Arg470. Active-site residues include His515 and Glu517.

This sequence belongs to the CTP synthase family. In terms of assembly, homotetramer.

The catalysed reaction is UTP + L-glutamine + ATP + H2O = CTP + L-glutamate + ADP + phosphate + 2 H(+). It carries out the reaction L-glutamine + H2O = L-glutamate + NH4(+). The enzyme catalyses UTP + NH4(+) + ATP = CTP + ADP + phosphate + 2 H(+). The protein operates within pyrimidine metabolism; CTP biosynthesis via de novo pathway; CTP from UDP: step 2/2. Allosterically activated by GTP, when glutamine is the substrate; GTP has no effect on the reaction when ammonia is the substrate. The allosteric effector GTP functions by stabilizing the protein conformation that binds the tetrahedral intermediate(s) formed during glutamine hydrolysis. Inhibited by the product CTP, via allosteric rather than competitive inhibition. Catalyzes the ATP-dependent amination of UTP to CTP with either L-glutamine or ammonia as the source of nitrogen. Regulates intracellular CTP levels through interactions with the four ribonucleotide triphosphates. The protein is CTP synthase of Vibrio parahaemolyticus serotype O3:K6 (strain RIMD 2210633).